Here is a 360-residue protein sequence, read N- to C-terminus: Photosystem II protein D1 2 (360 aa).

The next 3 helical transmembrane spans lie at 29–46 (YIGW…AATT), 118–133 (HFLT…EWEL), and 142–156 (WICL…AATA). His118 contributes to the chlorophyll a binding site. Tyr126 contributes to the pheophytin a binding site. Residues Asp170 and Glu189 each contribute to the [CaMn4O5] cluster site. Residues 197 to 218 (FHMLGVAGVFGGSLFSAMHGSL) form a helical membrane-spanning segment. His198 provides a ligand contact to chlorophyll a. A quinone-binding positions include His215 and 264 to 265 (SF). His215 contributes to the Fe cation binding site. His272 lines the Fe cation pocket. The helical transmembrane segment at 274-288 (FLAAWPVIGIWFTAL) threads the bilayer. [CaMn4O5] cluster is bound by residues His332, Glu333, Asp342, and Ala344. Residues 345–360 (AGEVAPVAISAPAING) constitute a propeptide that is removed on maturation.

It belongs to the reaction center PufL/M/PsbA/D family. As to quaternary structure, PSII is composed of 1 copy each of membrane proteins PsbA, PsbB, PsbC, PsbD, PsbE, PsbF, PsbH, PsbI, PsbJ, PsbK, PsbL, PsbM, PsbT, PsbX, PsbY, PsbZ, Psb30/Ycf12, peripheral proteins PsbO, CyanoQ (PsbQ), PsbU, PsbV and a large number of cofactors. It forms dimeric complexes. The D1/D2 heterodimer binds P680, chlorophylls that are the primary electron donor of PSII, and subsequent electron acceptors. It shares a non-heme iron and each subunit binds pheophytin, quinone, additional chlorophylls, carotenoids and lipids. D1 provides most of the ligands for the Mn4-Ca-O5 cluster of the oxygen-evolving complex (OEC). There is also a Cl(-1) ion associated with D1 and D2, which is required for oxygen evolution. The PSII complex binds additional chlorophylls, carotenoids and specific lipids. serves as cofactor. In terms of processing, tyr-161 forms a radical intermediate that is referred to as redox-active TyrZ, YZ or Y-Z. Post-translationally, C-terminally processed by CtpA; processing is essential to allow assembly of the oxygen-evolving complex and thus photosynthetic growth.

The protein localises to the cellular thylakoid membrane. The enzyme catalyses 2 a plastoquinone + 4 hnu + 2 H2O = 2 a plastoquinol + O2. Photosystem II (PSII) is a light-driven water:plastoquinone oxidoreductase that uses light energy to abstract electrons from H(2)O, generating O(2) and a proton gradient subsequently used for ATP formation. It consists of a core antenna complex that captures photons, and an electron transfer chain that converts photonic excitation into a charge separation. The D1/D2 (PsbA/PsbD) reaction center heterodimer binds P680, the primary electron donor of PSII as well as several subsequent electron acceptors. In Nostoc sp. (strain PCC 7120 / SAG 25.82 / UTEX 2576), this protein is Photosystem II protein D1 2.